A 525-amino-acid chain; its full sequence is GMP synthase [glutamine-hydrolyzing] (525 aa).

The Glutamine amidotransferase type-1 domain occupies Arg9–Leu207. Cys86 (nucleophile) is an active-site residue. Active-site residues include His181 and Glu183. One can recognise a GMPS ATP-PPase domain in the interval Trp208–Arg400. Ser235–Ser241 lines the ATP pocket.

As to quaternary structure, homodimer.

It carries out the reaction XMP + L-glutamine + ATP + H2O = GMP + L-glutamate + AMP + diphosphate + 2 H(+). It functions in the pathway purine metabolism; GMP biosynthesis; GMP from XMP (L-Gln route): step 1/1. Its function is as follows. Catalyzes the synthesis of GMP from XMP. This Pectobacterium atrosepticum (strain SCRI 1043 / ATCC BAA-672) (Erwinia carotovora subsp. atroseptica) protein is GMP synthase [glutamine-hydrolyzing].